We begin with the raw amino-acid sequence, 473 residues long: tRNA-2-methylthio-N(6)-dimethylallyladenosine synthase (473 aa).

The disordered stretch occupies residues 1-21; that stretch reads MTQDSALLQAPEAIPSESLRD. The MTTase N-terminal domain maps to 26–146; the sequence is RKVFIKTYGC…LPEALRRAKQ (121 aa). The [4Fe-4S] cluster site is built by Cys35, Cys71, Cys109, Cys187, Cys191, and Cys194. The Radical SAM core domain maps to 173 to 405; the sequence is RARGVTAFLT…QMLLLKQQQE (233 aa). One can recognise a TRAM domain in the interval 408–470; that stretch reads ESCVGKEIDL…TNSLFAEHAE (63 aa).

It belongs to the methylthiotransferase family. MiaB subfamily. As to quaternary structure, monomer. Requires [4Fe-4S] cluster as cofactor.

Its subcellular location is the cytoplasm. It catalyses the reaction N(6)-dimethylallyladenosine(37) in tRNA + (sulfur carrier)-SH + AH2 + 2 S-adenosyl-L-methionine = 2-methylsulfanyl-N(6)-dimethylallyladenosine(37) in tRNA + (sulfur carrier)-H + 5'-deoxyadenosine + L-methionine + A + S-adenosyl-L-homocysteine + 2 H(+). Functionally, catalyzes the methylthiolation of N6-(dimethylallyl)adenosine (i(6)A), leading to the formation of 2-methylthio-N6-(dimethylallyl)adenosine (ms(2)i(6)A) at position 37 in tRNAs that read codons beginning with uridine. The sequence is that of tRNA-2-methylthio-N(6)-dimethylallyladenosine synthase from Rhizobium johnstonii (strain DSM 114642 / LMG 32736 / 3841) (Rhizobium leguminosarum bv. viciae).